A 286-amino-acid polypeptide reads, in one-letter code: Undecaprenyl-diphosphatase (286 aa).

The next 7 helical transmembrane spans lie at 43–63 (FWKMFSIVIQLGAILCLPIYF), 91–111 (LTIIAFLCTAIPAFLFTKIIG), 118–138 (IIMGSALLIGGIVMWIVDVMF), 150–170 (MSVGQAIWIGLCQVLSAVFPG), 189–209 (AAALEFSFFLSIPTMVVATCY), 236–256 (ITLAIGFIVSFIVAYFVVAWF), and 264–284 (GFVPFAVYRIVVGIAVLAWAL).

The protein belongs to the UppP family.

The protein localises to the cell inner membrane. It carries out the reaction di-trans,octa-cis-undecaprenyl diphosphate + H2O = di-trans,octa-cis-undecaprenyl phosphate + phosphate + H(+). Its function is as follows. Catalyzes the dephosphorylation of undecaprenyl diphosphate (UPP). Confers resistance to bacitracin. This is Undecaprenyl-diphosphatase from Koribacter versatilis (strain Ellin345).